We begin with the raw amino-acid sequence, 122 residues long: Large ribosomal subunit protein bL12 (122 aa).

It belongs to the bacterial ribosomal protein bL12 family. In terms of assembly, homodimer. Part of the ribosomal stalk of the 50S ribosomal subunit. Forms a multimeric L10(L12)X complex, where L10 forms an elongated spine to which 2 to 4 L12 dimers bind in a sequential fashion. Binds GTP-bound translation factors.

Its function is as follows. Forms part of the ribosomal stalk which helps the ribosome interact with GTP-bound translation factors. Is thus essential for accurate translation. The sequence is that of Large ribosomal subunit protein bL12 from Actinobacillus pleuropneumoniae serotype 5b (strain L20).